A 615-amino-acid chain; its full sequence is Neurosecretory protein VGF (615 aa).

A signal peptide spans 1 to 22; sequence MKALRLSASALFCLLLINGLGA. Disordered regions lie at residues 22-201 and 218-257; these read AAPP…ESPG and PERA…PKTH. Composition is skewed to pro residues over residues 25 to 35 and 129 to 141; these read PGRPEAQPPPL and PESP…PRPQ. The span at 179–194 shows a compositional bias: low complexity; sequence ETAAAETETRTHTLTR. At Q310 the chain carries Pyrrolidone carboxylic acid. The tract at residues 342–600 is disordered; that stretch reads RQRGLGGRGL…EAEERRLQEQ (259 aa). Over residues 378–394 the composition is skewed to acidic residues; that stretch reads VGEEDEEAAEAEAEAEE. The span at 415 to 433 shows a compositional bias: basic and acidic residues; the sequence is AEDKRSQEETPGHRRKEAE. S420 carries the post-translational modification Phosphoserine; by FAM20C. T424 is modified (phosphothreonine; by FAM20C). Residues 434–448 show a composition bias toward acidic residues; that stretch reads GTEEGGEEEDDEEMD. The span at 487 to 497 shows a compositional bias: pro residues; sequence PPEPVPPPRAA. At P577 the chain carries Proline amide. The segment covering 577–599 has biased composition (basic and acidic residues); that stretch reads PGREAQARRAQEEAEAEERRLQE.

In terms of assembly, interacts with HSPA8 on cell membrane. Interacts with C3AR1. Interacts with C1QBP. In terms of processing, multiple peptides are derived from VGF, with activities in synaptic plasticity, antidepression, penile erection, autonomic activation, and increases in energy expenditure. Central and peripheral nervous systems, synthesized exclusively in neuronal and neuroendocrine cells.

It localises to the secreted. The protein localises to the cytoplasmic vesicle. It is found in the secretory vesicle. Secreted polyprotein that is packaged and proteolytically processed by prohormone convertases PCSK1 and PCSK2 in a cell-type-specific manner. VGF and peptides derived from its processing play many roles in neurogenesis and neuroplasticity associated with learning, memory, depression and chronic pain. In terms of biological role, plays a role in the control of body fluid homeostasis by regulating vasopressin release. Suppresses presynaptic glutamatergic neurons connected to vasopressin neurons. Its function is as follows. Plays a role in the control of body fluid homeostasis by regulating vasopressin release. Activates GABAergic interneurons which are inhibitory neurons of the nervous system and thereby suppresses presynaptic glutamatergic neurons. Also stimulates feeding behavior in an orexin-dependent manner in the hypothalamus. Functions as a positive regulator for the activation of orexin neurons resulting in elevated gastric acid secretion and gastric emptying. Functionally, secreted multifunctional neuropeptide that binds to different cell receptors and thereby plays multiple physiological roles including modulation of energy expenditure, pain, response to stress, gastric regulation, glucose homeostasis as well as lipolysis. Activates the G-protein-coupled receptor C3AR1 via a folding-upon-binding mechanism leading to enhanced lipolysis in adipocytes. Interacts with C1QBP receptor in macrophages and microglia causing increased levels of intracellular calcium and hypersensitivity. Plays a role in the regulation of memory formation and depression-related behaviors potentially by influencing synaptic plasticity and neurogenesis. Induces acute and transient activation of the NTRK2/TRKB receptor and subsequent CREB phosphorylation. Also induces insulin secretion in insulinoma cells by increasing intracellular calcium mobilization. In terms of biological role, has bactericidal activity against M.luteus, and antifungal activity against P. Pastoris. This is Neurosecretory protein VGF (VGF) from Homo sapiens (Human).